Consider the following 392-residue polypeptide: MTLAAITYTRGSLSILNQLLLPHQTTYDPLHSACDAWHAIHEMRVRGAPAIAIVAALSLAVELDALAANNQLSPEPKEVEVFIREKLEYLVSSRPTAVNLAEAAGRLGGIVSAKAEVRGVDGREVAEAYIAAAQRMLEDDVKDNRAIGEFGARWVLENGVATGSESGSEKGKVAVLTHCNTGSLATAGYGTALGVIRSLHATGSLERAYCTETRPYNQGSRLTAYELVHDKIPATLITDNMAAALLARNRAGSAASVGVSAIIVGADRVAANGDTANKIGTYGLAVLAKYHGVKFLVAAPRTTIDMNTKTGADIVIEERPKQEVTRVRGPRAGEEVDGLRAMETITVAANGIDVWNPAFDVTPAALIDGIITEVGVVEKDASGAFHLARIFE.

D267 (proton donor) is an active-site residue.

The protein belongs to the eIF-2B alpha/beta/delta subunits family. MtnA subfamily.

Its subcellular location is the cytoplasm. The protein localises to the nucleus. The catalysed reaction is 5-(methylsulfanyl)-alpha-D-ribose 1-phosphate = 5-(methylsulfanyl)-D-ribulose 1-phosphate. It participates in amino-acid biosynthesis; L-methionine biosynthesis via salvage pathway; L-methionine from S-methyl-5-thio-alpha-D-ribose 1-phosphate: step 1/6. In terms of biological role, catalyzes the interconversion of methylthioribose-1-phosphate (MTR-1-P) into methylthioribulose-1-phosphate (MTRu-1-P). The sequence is that of Methylthioribose-1-phosphate isomerase from Ajellomyces dermatitidis (strain ER-3 / ATCC MYA-2586) (Blastomyces dermatitidis).